The sequence spans 757 residues: Kin of IRRE-like protein 1 (757 aa).

A signal peptide spans 1–16 (MLSLLVWILTLSDTFS). Over 17 to 499 (QGTQTRFSQE…REVLPVGIIA (483 aa)) the chain is Extracellular. Ig-like C2-type domains follow at residues 21-115 (TRFS…AKLT), 120-216 (PEDT…TSIE), 223-299 (PTVT…TNVS), 308-387 (PRIV…EVPL), and 392-488 (PPII…IQLE). The cysteines at positions 42 and 100 are disulfide-linked. N-linked (GlcNAc...) asparagine glycosylation is found at asparagine 46 and asparagine 140. 2 disulfides stabilise this stretch: cysteine 143-cysteine 200 and cysteine 244-cysteine 287. Asparagine 297 carries N-linked (GlcNAc...) asparagine glycosylation. Cysteines 329 and 371 form a disulfide. A Cell attachment site motif is present at residues 405–407 (RGD). Cysteines 413 and 472 form a disulfide. N-linked (GlcNAc...) asparagine glycosylation is present at asparagine 471. The helical transmembrane segment at 500 to 520 (GATIGASILLIFFFIALVFFL) threads the bilayer. The Cytoplasmic segment spans residues 521 to 757 (YRRRKGSRKD…RFQQRMQTHV (237 aa)). Position 574 is a phosphoserine (serine 574). Phosphotyrosine; by FYN is present on residues tyrosine 605 and tyrosine 606. 2 positions are modified to phosphotyrosine: tyrosine 622 and tyrosine 625. The interval 649–679 (QLNTYSRGPASDYGPEPTPPGPAAPAGTDTT) is disordered. Position 724 is a phosphotyrosine (tyrosine 724).

The protein belongs to the immunoglobulin superfamily. Interacts with TJP1/ZO-1 and with NPHS2/podocin (via the C-terminus). Interacts with NPHS1/nephrin (via the Ig-like domains); this interaction is dependent on KIRREL1 glycosylation. Homodimer (via the Ig-like domains). Interacts when tyrosine-phosphorylated with GRB2. In terms of processing, phosphorylation probably regulates the interaction with NSH2. Phosphorylated at Tyr-605 and Tyr-606 by FYN, leading to GRB2 binding. N-glycosylated. Abundantly expressed in kidney. Specifically expressed in podocytes of kidney glomeruli.

The protein localises to the cell membrane. Its function is as follows. Required for proper function of the glomerular filtration barrier. It is involved in the maintenance of a stable podocyte architecture with interdigitating foot processes connected by specialized cell-cell junctions, known as the slit diaphragm. It is a signaling protein that needs the presence of TEC kinases to fully trans-activate the transcription factor AP-1. The polypeptide is Kin of IRRE-like protein 1 (Homo sapiens (Human)).